The following is a 156-amino-acid chain: Ribosomal RNA large subunit methyltransferase H (156 aa).

S-adenosyl-L-methionine-binding positions include Leu73, Gly104, and 123-128 (LSPLTF).

It belongs to the RNA methyltransferase RlmH family. As to quaternary structure, homodimer.

It is found in the cytoplasm. It catalyses the reaction pseudouridine(1915) in 23S rRNA + S-adenosyl-L-methionine = N(3)-methylpseudouridine(1915) in 23S rRNA + S-adenosyl-L-homocysteine + H(+). Specifically methylates the pseudouridine at position 1915 (m3Psi1915) in 23S rRNA. This is Ribosomal RNA large subunit methyltransferase H from Thioalkalivibrio sulfidiphilus (strain HL-EbGR7).